The sequence spans 159 residues: UPF0262 protein PHZ_c2197 (159 aa).

The protein belongs to the UPF0262 family.

The chain is UPF0262 protein PHZ_c2197 from Phenylobacterium zucineum (strain HLK1).